A 295-amino-acid chain; its full sequence is Phosphatidylserine decarboxylase proenzyme (295 aa).

Residues Asp101, His158, and Ser262 each act as charge relay system; for autoendoproteolytic cleavage activity in the active site. Ser262 functions as the Schiff-base intermediate with substrate; via pyruvic acid; for decarboxylase activity in the catalytic mechanism. Ser262 bears the Pyruvic acid (Ser); by autocatalysis mark.

The protein belongs to the phosphatidylserine decarboxylase family. PSD-B subfamily. Prokaryotic type I sub-subfamily. In terms of assembly, heterodimer of a large membrane-associated beta subunit and a small pyruvoyl-containing alpha subunit. The cofactor is pyruvate. In terms of processing, is synthesized initially as an inactive proenzyme. Formation of the active enzyme involves a self-maturation process in which the active site pyruvoyl group is generated from an internal serine residue via an autocatalytic post-translational modification. Two non-identical subunits are generated from the proenzyme in this reaction, and the pyruvate is formed at the N-terminus of the alpha chain, which is derived from the carboxyl end of the proenzyme. The autoendoproteolytic cleavage occurs by a canonical serine protease mechanism, in which the side chain hydroxyl group of the serine supplies its oxygen atom to form the C-terminus of the beta chain, while the remainder of the serine residue undergoes an oxidative deamination to produce ammonia and the pyruvoyl prosthetic group on the alpha chain. During this reaction, the Ser that is part of the protease active site of the proenzyme becomes the pyruvoyl prosthetic group, which constitutes an essential element of the active site of the mature decarboxylase.

The protein localises to the cell membrane. The catalysed reaction is a 1,2-diacyl-sn-glycero-3-phospho-L-serine + H(+) = a 1,2-diacyl-sn-glycero-3-phosphoethanolamine + CO2. It participates in phospholipid metabolism; phosphatidylethanolamine biosynthesis; phosphatidylethanolamine from CDP-diacylglycerol: step 2/2. Catalyzes the formation of phosphatidylethanolamine (PtdEtn) from phosphatidylserine (PtdSer). The sequence is that of Phosphatidylserine decarboxylase proenzyme from Pasteurella multocida (strain Pm70).